The following is a 388-amino-acid chain: Pepsin F (388 aa).

Positions 1 to 15 (MKWLGLLGLVALSEC) are cleaved as a signal peptide. A propeptide spans 16 to 58 (LVTIPLMKVKSMRENLRENDILLDYLEKHPYRPTYKLLSGQQD) (activation peptide). The Peptidase A1 domain maps to 74 to 385 (YIGIISIGTP…DRANNRIGLA (312 aa)). Asp-92 is an active-site residue. 2 disulfide bridges follow: Cys-105–Cys-110 and Cys-266–Cys-270. Asp-275 is a catalytic residue. A disulfide bridge links Cys-309 with Cys-343.

It belongs to the peptidase A1 family.

It localises to the secreted. It catalyses the reaction Preferential cleavage: hydrophobic, preferably aromatic, residues in P1 and P1' positions. Cleaves 1-Phe-|-Val-2, 4-Gln-|-His-5, 13-Glu-|-Ala-14, 14-Ala-|-Leu-15, 15-Leu-|-Tyr-16, 16-Tyr-|-Leu-17, 23-Gly-|-Phe-24, 24-Phe-|-Phe-25 and 25-Phe-|-Tyr-26 bonds in the B chain of insulin.. Shows particularly broad specificity; although bonds involving phenylalanine and leucine are preferred, many others are also cleaved to some extent. The chain is Pepsin F from Oryctolagus cuniculus (Rabbit).